The primary structure comprises 235 residues: Uracil-DNA glycosylase (235 aa).

D71 acts as the Proton acceptor in catalysis.

This sequence belongs to the uracil-DNA glycosylase (UDG) superfamily. UNG family.

It is found in the cytoplasm. It catalyses the reaction Hydrolyzes single-stranded DNA or mismatched double-stranded DNA and polynucleotides, releasing free uracil.. Excises uracil residues from the DNA which can arise as a result of misincorporation of dUMP residues by DNA polymerase or due to deamination of cytosine. The protein is Uracil-DNA glycosylase of Campylobacter hominis (strain ATCC BAA-381 / DSM 21671 / CCUG 45161 / LMG 19568 / NCTC 13146 / CH001A).